Here is a 292-residue protein sequence, read N- to C-terminus: Phosphatidylserine decarboxylase proenzyme (292 aa).

Catalysis depends on charge relay system; for autoendoproteolytic cleavage activity residues Asp98, His153, and Ser254. Ser254 acts as the Schiff-base intermediate with substrate; via pyruvic acid; for decarboxylase activity in catalysis. The residue at position 254 (Ser254) is a Pyruvic acid (Ser); by autocatalysis.

Belongs to the phosphatidylserine decarboxylase family. PSD-B subfamily. Prokaryotic type I sub-subfamily. Heterodimer of a large membrane-associated beta subunit and a small pyruvoyl-containing alpha subunit. The cofactor is pyruvate. Is synthesized initially as an inactive proenzyme. Formation of the active enzyme involves a self-maturation process in which the active site pyruvoyl group is generated from an internal serine residue via an autocatalytic post-translational modification. Two non-identical subunits are generated from the proenzyme in this reaction, and the pyruvate is formed at the N-terminus of the alpha chain, which is derived from the carboxyl end of the proenzyme. The autoendoproteolytic cleavage occurs by a canonical serine protease mechanism, in which the side chain hydroxyl group of the serine supplies its oxygen atom to form the C-terminus of the beta chain, while the remainder of the serine residue undergoes an oxidative deamination to produce ammonia and the pyruvoyl prosthetic group on the alpha chain. During this reaction, the Ser that is part of the protease active site of the proenzyme becomes the pyruvoyl prosthetic group, which constitutes an essential element of the active site of the mature decarboxylase.

Its subcellular location is the cell membrane. It catalyses the reaction a 1,2-diacyl-sn-glycero-3-phospho-L-serine + H(+) = a 1,2-diacyl-sn-glycero-3-phosphoethanolamine + CO2. The protein operates within phospholipid metabolism; phosphatidylethanolamine biosynthesis; phosphatidylethanolamine from CDP-diacylglycerol: step 2/2. Catalyzes the formation of phosphatidylethanolamine (PtdEtn) from phosphatidylserine (PtdSer). This chain is Phosphatidylserine decarboxylase proenzyme, found in Halorhodospira halophila (strain DSM 244 / SL1) (Ectothiorhodospira halophila (strain DSM 244 / SL1)).